A 356-amino-acid polypeptide reads, in one-letter code: Peptide chain release factor 1 (356 aa).

Glutamine 234 is subject to N5-methylglutamine.

This sequence belongs to the prokaryotic/mitochondrial release factor family. Post-translationally, methylated by PrmC. Methylation increases the termination efficiency of RF1.

Its subcellular location is the cytoplasm. In terms of biological role, peptide chain release factor 1 directs the termination of translation in response to the peptide chain termination codons UAG and UAA. In Parafrankia sp. (strain EAN1pec), this protein is Peptide chain release factor 1.